Reading from the N-terminus, the 471-residue chain is U1 small nuclear ribonucleoprotein 70 kDa (471 aa).

Residues 48 to 78 (FEDPRDAPPPTRAETREERMERKRREKIERR) are disordered. Over residues 60-78 (AETREERMERKRREKIERR) the composition is skewed to basic and acidic residues. The segment at 92 to 205 (HNDQNAQGDA…GGGLGGTRRG (114 aa)) is required for interaction with U1 RNA. Residues 103 to 184 (KTLFVARVNY…RRVLVDVERG (82 aa)) form the RRM domain. Residues 190-471 (WRPRRLGGGL…NGYMMEPPME (282 aa)) are disordered. Over residues 195-204 (LGGGLGGTRR) the composition is skewed to gly residues. Basic and acidic residues predominate over residues 210-246 (NIRHSGRDDTSRYDERDRERERDRRERSREREKEPRE). Residues 247–261 (RRRSRSRERRRKSRS) are compositionally biased toward basic residues. A compositionally biased stretch (basic and acidic residues) spans 262–288 (REKEERKRTREKSKDKDKEKDKDNKDR). Residues 289-298 (DRKRRSRSRE) are compositionally biased toward basic residues. Residues 299-316 (RKRERDRDREKKEERVEA) show a composition bias toward basic and acidic residues. Residues 317–326 (EVPEADDAPQ) show a composition bias toward acidic residues. Over residues 339-428 (IELKQEPEEK…RSEKREERVP (90 aa)) the composition is skewed to basic and acidic residues.

As to quaternary structure, component of the U1 snRNP. The U1 snRNP is composed of the U1 snRNA and the 7 core Sm proteins snrpb, snrpd1, snrpd2, snrpd3, snrpe, snrpf and snrpg that assemble in a heptameric protein ring on the Sm site of the small nuclear RNA to form the core snRNP, and at least three U1 snRNP-specific proteins snrnp70/U1-70K, snrpa/U1-A and snrpc/U1-C.

The protein resides in the nucleus speckle. It localises to the nucleus. It is found in the nucleoplasm. In terms of biological role, component of the spliceosomal U1 snRNP, which is essential for recognition of the pre-mRNA 5' splice-site and the subsequent assembly of the spliceosome. snrnp70 binds to the loop I region of U1-snRNA. The protein is U1 small nuclear ribonucleoprotein 70 kDa (snrnp70) of Xenopus laevis (African clawed frog).